We begin with the raw amino-acid sequence, 435 residues long: UDP-N-acetylmuramoylalanine--D-glutamate ligase (435 aa).

Residue 114–120 (GSNGKST) coordinates ATP.

Belongs to the MurCDEF family.

It localises to the cytoplasm. The enzyme catalyses UDP-N-acetyl-alpha-D-muramoyl-L-alanine + D-glutamate + ATP = UDP-N-acetyl-alpha-D-muramoyl-L-alanyl-D-glutamate + ADP + phosphate + H(+). The protein operates within cell wall biogenesis; peptidoglycan biosynthesis. In terms of biological role, cell wall formation. Catalyzes the addition of glutamate to the nucleotide precursor UDP-N-acetylmuramoyl-L-alanine (UMA). This Haemophilus ducreyi (strain 35000HP / ATCC 700724) protein is UDP-N-acetylmuramoylalanine--D-glutamate ligase.